The primary structure comprises 62 residues: UPF0337 protein XCC0070 (62 aa).

Residues 32 to 62 (LEGAAEKNIGKVQRKAGELADDVRDATKSTR) are disordered.

This sequence belongs to the UPF0337 (CsbD) family.

This Xanthomonas campestris pv. campestris (strain ATCC 33913 / DSM 3586 / NCPPB 528 / LMG 568 / P 25) protein is UPF0337 protein XCC0070.